Here is a 203-residue protein sequence, read N- to C-terminus: Ribosome maturation factor RimP (203 aa).

The span at 1–21 (MSDSEATTSTDRSESNSTATI) shows a compositional bias: polar residues. Residues 1–23 (MSDSEATTSTDRSESNSTATIHN) form a disordered region.

Belongs to the RimP family.

The protein localises to the cytoplasm. Functionally, required for maturation of 30S ribosomal subunits. The polypeptide is Ribosome maturation factor RimP (Paenarthrobacter aurescens (strain TC1)).